We begin with the raw amino-acid sequence, 355 residues long: DNA-directed RNA polymerase subunit alpha (355 aa).

The segment at 1-248 is alpha N-terminal domain (alpha-NTD); that stretch reads MYYDDGIPVF…EQLQPFISSD (248 aa). Residues 267-355 are alpha C-terminal domain (alpha-CTD); it reads YDPILLRKVD…ELARQHTDED (89 aa).

The protein belongs to the RNA polymerase alpha chain family. Homodimer. The RNAP catalytic core consists of 2 alpha, 1 beta, 1 beta' and 1 omega subunit. When a sigma factor is associated with the core the holoenzyme is formed, which can initiate transcription.

It carries out the reaction RNA(n) + a ribonucleoside 5'-triphosphate = RNA(n+1) + diphosphate. Functionally, DNA-dependent RNA polymerase catalyzes the transcription of DNA into RNA using the four ribonucleoside triphosphates as substrates. In Wolbachia sp. subsp. Brugia malayi (strain TRS), this protein is DNA-directed RNA polymerase subunit alpha.